A 345-amino-acid chain; its full sequence is D-fructose 1,6-bisphosphatase class 2/sedoheptulose 1,7-bisphosphatase (345 aa).

Mn(2+) is bound by residues D33, E57, D97, and E100. Residues 100 to 102, Y131, 176 to 178, and 198 to 200 each bind substrate; these read EGT, RPR, and DGD. E225 contacts Mn(2+).

The protein belongs to the FBPase class 2 family. As to quaternary structure, homotetramer. Mn(2+) is required as a cofactor.

It catalyses the reaction beta-D-fructose 1,6-bisphosphate + H2O = beta-D-fructose 6-phosphate + phosphate. The enzyme catalyses D-sedoheptulose 1,7-bisphosphate + H2O = D-sedoheptulose 7-phosphate + phosphate. Its pathway is carbohydrate biosynthesis; Calvin cycle. Functionally, catalyzes the hydrolysis of fructose 1,6-bisphosphate (Fru 1,6-P2) and sedoheptulose 1,7-bisphosphate (Sed 1,7-P2) to fructose 6-phosphate and sedoheptulose 7-phosphate, respectively. The polypeptide is D-fructose 1,6-bisphosphatase class 2/sedoheptulose 1,7-bisphosphatase (Trichodesmium erythraeum (strain IMS101)).